A 226-amino-acid polypeptide reads, in one-letter code: ATP synthase subunit a (226 aa).

5 consecutive transmembrane segments (helical) span residues 18–38 (LSLNWLSTFLGLFLIPVSYWL), 74–94 (FISLFSLIMFNNFLGLFPYIF), 100–120 (LTLTLALAFPLWLSFMLYGWI), 158–180 (LAVRLTANMIAGHLLLTLLGNTG), and 197–217 (IALLVLESAVAIIQSYVFAVL).

The protein belongs to the ATPase A chain family. As to quaternary structure, F-type ATPases have 2 components, CF(1) - the catalytic core - and CF(0) - the membrane proton channel. CF(1) has five subunits: alpha(3), beta(3), gamma(1), delta(1), epsilon(1). CF(0) has three main subunits: a, b and c.

The protein resides in the mitochondrion inner membrane. In terms of biological role, mitochondrial membrane ATP synthase (F(1)F(0) ATP synthase or Complex V) produces ATP from ADP in the presence of a proton gradient across the membrane which is generated by electron transport complexes of the respiratory chain. F-type ATPases consist of two structural domains, F(1) - containing the extramembraneous catalytic core and F(0) - containing the membrane proton channel, linked together by a central stalk and a peripheral stalk. During catalysis, ATP synthesis in the catalytic domain of F(1) is coupled via a rotary mechanism of the central stalk subunits to proton translocation. Key component of the proton channel; it may play a direct role in the translocation of protons across the membrane. The polypeptide is ATP synthase subunit a (mt:ATPase6) (Anopheles gambiae (African malaria mosquito)).